A 586-amino-acid chain; its full sequence is Mitogen-activated protein kinase 15 (586 aa).

Residues 14 to 305 form the Protein kinase domain; sequence YDIKKRLGKG…AEEALEHPYV (292 aa). ATP is bound by residues 20 to 28 and Lys43; that span reads LGKGAYGIV. Catalysis depends on Asp138, which acts as the Proton acceptor. Disordered regions lie at residues 354 to 506 and 520 to 539; these read QKRE…DAPP and NQRTAPIQGRDPRSAPRFGR. Positions 382–393 are enriched in pro residues; it reads PAPPAGTNPAPQ. Positions 400–414 are enriched in low complexity; that stretch reads PQRAAIAAPNQPPAQ. A compositionally biased stretch (polar residues) spans 415-439; that stretch reads KDSTQQSPKIKAPSSNPITHSTTHG. Residues 452-463 are compositionally biased toward low complexity; the sequence is AGQQGAAGTTAQ. Over residues 464 to 473 the composition is skewed to basic and acidic residues; that stretch reads EVRKEVESRS. Over residues 484-498 the composition is skewed to polar residues; it reads FSHSQQARAAATNSA.

Interacts with dvl2.

Its subcellular location is the cytoplasm. It localises to the cytoskeleton. It is found in the cilium basal body. The protein resides in the cell projection. The protein localises to the cilium. Its subcellular location is the cell junction. The catalysed reaction is L-seryl-[protein] + ATP = O-phospho-L-seryl-[protein] + ADP + H(+). The enzyme catalyses L-threonyl-[protein] + ATP = O-phospho-L-threonyl-[protein] + ADP + H(+). In terms of biological role, atypical MAPK protein that regulates ciliogenesis by phosphorylating rcsd1 through its binding with dvl2. In Xenopus laevis (African clawed frog), this protein is Mitogen-activated protein kinase 15.